Here is a 365-residue protein sequence, read N- to C-terminus: UDP-N-acetylglucosamine--N-acetylmuramyl-(pentapeptide) pyrophosphoryl-undecaprenol N-acetylglucosamine transferase (365 aa).

UDP-N-acetyl-alpha-D-glucosamine-binding positions include 17 to 19, Asn-129, Arg-167, Ser-194, Ile-250, 269 to 274, and Gln-295; these read TGG and ALTVSE.

The protein belongs to the glycosyltransferase 28 family. MurG subfamily.

It localises to the cell inner membrane. The enzyme catalyses di-trans,octa-cis-undecaprenyl diphospho-N-acetyl-alpha-D-muramoyl-L-alanyl-D-glutamyl-meso-2,6-diaminopimeloyl-D-alanyl-D-alanine + UDP-N-acetyl-alpha-D-glucosamine = di-trans,octa-cis-undecaprenyl diphospho-[N-acetyl-alpha-D-glucosaminyl-(1-&gt;4)]-N-acetyl-alpha-D-muramoyl-L-alanyl-D-glutamyl-meso-2,6-diaminopimeloyl-D-alanyl-D-alanine + UDP + H(+). Its pathway is cell wall biogenesis; peptidoglycan biosynthesis. Its function is as follows. Cell wall formation. Catalyzes the transfer of a GlcNAc subunit on undecaprenyl-pyrophosphoryl-MurNAc-pentapeptide (lipid intermediate I) to form undecaprenyl-pyrophosphoryl-MurNAc-(pentapeptide)GlcNAc (lipid intermediate II). This is UDP-N-acetylglucosamine--N-acetylmuramyl-(pentapeptide) pyrophosphoryl-undecaprenol N-acetylglucosamine transferase from Shewanella sediminis (strain HAW-EB3).